Reading from the N-terminus, the 524-residue chain is MIHKSDSDTTVRRFDLSQQFTAMQRISVVLSRATEASKTLQEVLSVLHNDAFMQHGMICLYDSQQEILSIEALQQTEDQTLPGSTQIRYRPGEGLVGTVLAQGQSLVLPRVADDQRFLDRLSLYDYDLPFIAVPLMGPHSRPIGVLAAHAMARQEERLPACTRFLETVANLIAQTIRLMILPTSAAQAPQQSPRIERPRACTPSRGFGLENMVGKSPAMRQIMDIIRQVSRWDTTVLVRGESGTGKELIANAIHHNSPRAAAAFVKFNCAALPDNLLESELFGHEKGAFTGAVRQRKGRFELADGGTLFLDEIGESSASFQAKLLRILQEGEMERVGGDETLRVNVRIIAATNRHLEEEVRLGHFREDLYYRLNVMPIALPPLRERQEDIAELAHFLVRKIAHSQGRTLRISDGAIRLLMEYSWPGNVRELENCLERSAVLSESGLIDRDVILFNHRDNPPKALASSGPAEDGWLDNSLDERQRLIAALEKAGWVQAKAARLLGMTPRQVAYRIQIMDITMPRL.

Positions 1-182 (MIHKSDSDTT…AQTIRLMILP (182 aa)) are a domain. Residues 35-176 (EASKTLQEVL…TVANLIAQTI (142 aa)) enclose the GAF domain. The Sigma-54 factor interaction domain maps to 212–481 (MVGKSPAMRQ…DGWLDNSLDE (270 aa)). ATP-binding positions include 240-247 (GESGTGKE) and 303-312 (ADGGTLFLDE). Residues 482–524 (RQRLIAALEKAGWVQAKAARLLGMTPRQVAYRIQIMDITMPRL) are C-terminal DNA-binding domain. The segment at residues 496 to 515 (QAKAARLLGMTPRQVAYRIQ) is a DNA-binding region (H-T-H motif).

As to quaternary structure, interacts with sigma-54.

Its function is as follows. Required for activation of most nif operons, which are directly involved in nitrogen fixation. The protein is Nif-specific regulatory protein (nifA) of Klebsiella pneumoniae.